The sequence spans 52 residues: Large ribosomal subunit protein bL33 (52 aa).

This sequence belongs to the bacterial ribosomal protein bL33 family.

The chain is Large ribosomal subunit protein bL33 from Chlamydia abortus (strain DSM 27085 / S26/3) (Chlamydophila abortus).